Reading from the N-terminus, the 119-residue chain is MAATMQALLVIALLHLATATPVVTKHKVSTFSTGFLGHPVGGLGYGGLGYGGLGYGGLGVAGLGYGGLGYPGAALGGAYTHHAALGGLGYPLGIGAGVVAPHVVNSKIAAPLAPVVAAI.

Positions 1–19 (MAATMQALLVIALLHLATA) are cleaved as a signal peptide. Tandem repeats lie at residues 41 to 45 (GGLGY), 46 to 50 (GGLGY), 51 to 55 (GGLGY), 56 to 60 (GGLGV), 61 to 65 (AGLGY), 66 to 70 (GGLGY), and 86 to 90 (GGLGY). The segment at 41 to 90 (GGLGYGGLGYGGLGYGGLGVAGLGYGGLGYPGAALGGAYTHHAALGGLGY) is 7 X 5 AA approximate repeats.

In terms of assembly, the polymeric lamprin chains self-aggregate to form fibers and have secondary structures particularly rich in beta-sheets and in beta-turns.

It localises to the secreted. It is found in the extracellular space. The protein localises to the extracellular matrix. Functionally, self-aggregating protein that is part of the soluble form of lamprin. This chain is Lamprin 1.8-10, found in Petromyzon marinus (Sea lamprey).